We begin with the raw amino-acid sequence, 139 residues long: D-ribose pyranase (139 aa).

The active-site Proton donor is the His20. Substrate is bound by residues Asp28, His106, and 128 to 130 (YAN).

It belongs to the RbsD / FucU family. RbsD subfamily. In terms of assembly, homodecamer.

The protein resides in the cytoplasm. The enzyme catalyses beta-D-ribopyranose = beta-D-ribofuranose. It functions in the pathway carbohydrate metabolism; D-ribose degradation; D-ribose 5-phosphate from beta-D-ribopyranose: step 1/2. In terms of biological role, catalyzes the interconversion of beta-pyran and beta-furan forms of D-ribose. The protein is D-ribose pyranase of Escherichia coli O6:H1 (strain CFT073 / ATCC 700928 / UPEC).